The chain runs to 258 residues: Transcription factor ORG3 (258 aa).

Residues 76-128 (VKKLNHNASERDRRRKINSLFSSLRSCLPASGQSKKLSIPATVSRSLKYIPEL) enclose the bHLH domain.

In terms of assembly, homodimer. As to expression, expressed in vascular tissues. Detected in roots.

It localises to the nucleus. The sequence is that of Transcription factor ORG3 (ORG3) from Arabidopsis thaliana (Mouse-ear cress).